An 865-amino-acid chain; its full sequence is DNA topoisomerase 1 (865 aa).

Residues 3 to 142 (KALVIVESPA…RYSRVVFNEI (140 aa)) enclose the Toprim domain. Mg(2+) is bound at residue Glu-9. Residues 37–65 (LPTSGSAAKKSADSTSTKTAKKPKKDERG) are disordered. A compositionally biased stretch (low complexity) spans 39–54 (TSGSAAKKSADSTSTK). Asp-111 serves as a coordination point for Mg(2+). The 418-residue stretch at 158–575 (NIDRVNAQQA…HFFSDFTQQL (418 aa)) folds into the Topo IA-type catalytic domain. The interaction with DNA stretch occupies residues 192–197 (SAGRVQ). Residue Tyr-319 is the O-(5'-phospho-DNA)-tyrosine intermediate of the active site. 3 C4-type zinc fingers span residues 599–630 (CPTCGRKMGIRTASTGVFLGCSGYALPPKERC), 662–689 (CPKCGTAMDSYLIDPKRKLHVCGNNPTC), and 711–736 (CEKCGSEMHLKMGRFGKYMACTNEEC).

Belongs to the type IA topoisomerase family. Monomer. Mn(2+) serves as cofactor. It depends on Ca(2+) as a cofactor.

It catalyses the reaction ATP-independent breakage of single-stranded DNA, followed by passage and rejoining.. Its function is as follows. Releases the supercoiling and torsional tension of DNA, which is introduced during the DNA replication and transcription, by transiently cleaving and rejoining one strand of the DNA duplex. Introduces a single-strand break via transesterification at a target site in duplex DNA. The scissile phosphodiester is attacked by the catalytic tyrosine of the enzyme, resulting in the formation of a DNA-(5'-phosphotyrosyl)-enzyme intermediate and the expulsion of a 3'-OH DNA strand. The free DNA strand then undergoes passage around the unbroken strand, thus removing DNA supercoils. Finally, in the religation step, the DNA 3'-OH attacks the covalent intermediate to expel the active-site tyrosine and restore the DNA phosphodiester backbone. The chain is DNA topoisomerase 1 from Escherichia coli (strain K12).